The sequence spans 218 residues: Ribosomal RNA small subunit methyltransferase G (218 aa).

S-adenosyl-L-methionine-binding positions include Gly82, Leu87, 137-138 (VE), and Arg152.

The protein belongs to the methyltransferase superfamily. RNA methyltransferase RsmG family.

The protein resides in the cytoplasm. The catalysed reaction is guanosine(527) in 16S rRNA + S-adenosyl-L-methionine = N(7)-methylguanosine(527) in 16S rRNA + S-adenosyl-L-homocysteine. Functionally, specifically methylates the N7 position of guanine in position 527 of 16S rRNA. The chain is Ribosomal RNA small subunit methyltransferase G from Herminiimonas arsenicoxydans.